The sequence spans 503 residues: MSEQDITSQPAQDENQIMAERRQKLTEIRTSKGIAFPNDFRRQHLAAPLHAQYDATDKEALEAQPVEVVVAGRMMLKRVMGKASFATVQDSSGRIQFYISRDKVGEDVYADFKTWDMGDILGAKGTLMKTKTGELSVEVSELRLLSKSLRPLPDKFHGLADQEQKYRQRYVDLIINQDSRDTFIKRSKIVQTVREVMVGEDYLEVETPMMHPIPGGAAAKPFVTHHNALDMPLYLRIAPELYLKRLVVGGLERVFEINRNFRNEGMSTRHNPEFTMIEFYEAYCGYERMMEMTEKIIRRCAEAACGTTKVTYNGKEVDLGKPFDRFTIVGAIKHYNPQYTDEQLADEAWLKSEIKALGGKLPPAPGIGSLQLALFEECAEGKLWNPTFIIDYPVEVSPLARGSDADPSITERFELFIVGREHANGYSELNDPEDQAARFRSQVEQKDAGDDEAMHYDADYIRAMEYGLPPTGGCGIGIDRLVMLLTDAPSIRDVILFPHMRPE.

Residues E414 and E421 each coordinate Mg(2+).

Belongs to the class-II aminoacyl-tRNA synthetase family. As to quaternary structure, homodimer. Mg(2+) is required as a cofactor.

The protein resides in the cytoplasm. The catalysed reaction is tRNA(Lys) + L-lysine + ATP = L-lysyl-tRNA(Lys) + AMP + diphosphate. In Laribacter hongkongensis (strain HLHK9), this protein is Lysine--tRNA ligase.